Reading from the N-terminus, the 1229-residue chain is ABC transporter B family member 22 (1229 aa).

6 helical membrane-spanning segments follow: residues 22–42, 69–89, 145–167, 171–193, 251–271, and 274–294; these read MGLG…IFFI, VALL…GYCW, LPNF…IMLW, IVGF…ALIN, GIAI…TWYG, and MVMY…CITY. Residues 22 to 311 form the ABC transmembrane type-1 1 domain; it reads MGLGLIGAVG…GLSNLKYFSE (290 aa). The ABC transporter 1 domain maps to 346 to 582; it reads VQFKHVKFMY…VDGQYTSLVR (237 aa). Position 381–388 (381–388) interacts with ATP; it reads GGSGSGKS. 2 N-linked (GlcNAc...) asparagine glycosylation sites follow: Asn-529 and Asn-594. 2 helical membrane passes run 661 to 681 and 703 to 723; these read ALYG…YAYA and IYVL…IIQQ. In terms of domain architecture, ABC transmembrane type-1 2 spans 661-949; it reads ALYGCLSAVL…AGAMTMDLAK (289 aa). Residue Asn-758 is glycosylated (N-linked (GlcNAc...) asparagine). The next 4 helical transmembrane spans lie at 782–800, 807–823, 885–908, and 923–943; these read VSLL…TLGL, SIVM…CFYT, WLAG…NYWY, and FFEL…AGAM. The region spanning 984-1222 is the ABC transporter 2 domain; the sequence is IKFVNVDFAY…GPTGVYFSLV (239 aa). N-linked (GlcNAc...) asparagine glycosylation occurs at Asn-1004. 1019-1026 is a binding site for ATP; the sequence is GPSGSGKS. Asn-1157 carries N-linked (GlcNAc...) asparagine glycosylation.

This sequence belongs to the ABC transporter superfamily. ABCB family. Multidrug resistance exporter (TC 3.A.1.201) subfamily.

The protein localises to the membrane. This Arabidopsis thaliana (Mouse-ear cress) protein is ABC transporter B family member 22 (ABCB22).